We begin with the raw amino-acid sequence, 795 residues long: Protocadherin beta-12 (795 aa).

A signal peptide spans 1–26; sequence MENGGAGTLQIRQVLLFFVLLGMSQA. Over 27–690 the chain is Extracellular; it reads GSETGNFLVM…AQADSLTVYL (664 aa). Cadherin domains follow at residues 35 to 133, 138 to 242, 247 to 347, 352 to 451, and 456 to 561; these read VMEE…SPVF, MLLE…SPEF, YEVK…APEI, ITSP…APAF, and YALF…SPFV. 4 N-linked (GlcNAc...) asparagine glycosylation sites follow: N418, N436, N487, and N567. Residues 568–671 enclose the Cadherin 6 domain; it reads GSAPCTELVP…LVDGFSQPYL (104 aa). A helical membrane pass occupies residues 691 to 711; that stretch reads VVALASVSSLFLFSVLLFVAV. Residues 712–795 are Cytoplasmic-facing; the sequence is RLCRRSRAAP…NPPFQNNLGF (84 aa).

The protein resides in the cell membrane. Potential calcium-dependent cell-adhesion protein. May be involved in the establishment and maintenance of specific neuronal connections in the brain. The chain is Protocadherin beta-12 (PCDHB12) from Homo sapiens (Human).